Consider the following 416-residue polypeptide: RNA polymerase sigma factor SigA (416 aa).

Residues 184–254 form a sigma-70 factor domain-2 region; that stretch reads MVQSNLRLVV…TRAIADQSRT (71 aa). Positions 208-211 match the Interaction with polymerase core subunit RpoC motif; it reads DLIQ. The interval 263-338 is sigma-70 factor domain-3; that stretch reads ETISRIKKTT…EADGETPEDE (76 aa). Residues 351-404 are sigma-70 factor domain-4; that stretch reads VLDTLSPRERDVLRLRYGLDDGRMKTLEEIGQIFNVTRERIRQIEAKALRKLRH. The H-T-H motif DNA-binding region spans 377–396; sequence LEEIGQIFNVTRERIRQIEA.

This sequence belongs to the sigma-70 factor family. RpoD/SigA subfamily. In terms of assembly, interacts transiently with the RNA polymerase catalytic core.

It is found in the cytoplasm. Functionally, sigma factors are initiation factors that promote the attachment of RNA polymerase to specific initiation sites and are then released. This sigma factor is the primary sigma factor during exponential growth. The polypeptide is RNA polymerase sigma factor SigA (Microcystis aeruginosa).